The sequence spans 427 residues: Serine hydroxymethyltransferase (427 aa).

(6S)-5,6,7,8-tetrahydrofolate is bound by residues L122 and G126–L128. An N6-(pyridoxal phosphate)lysine modification is found at K231. S355–F357 is a (6S)-5,6,7,8-tetrahydrofolate binding site.

Belongs to the SHMT family. As to quaternary structure, homodimer. It depends on pyridoxal 5'-phosphate as a cofactor.

It localises to the cytoplasm. It catalyses the reaction (6R)-5,10-methylene-5,6,7,8-tetrahydrofolate + glycine + H2O = (6S)-5,6,7,8-tetrahydrofolate + L-serine. The protein operates within one-carbon metabolism; tetrahydrofolate interconversion. It participates in amino-acid biosynthesis; glycine biosynthesis; glycine from L-serine: step 1/1. Its function is as follows. Catalyzes the reversible interconversion of serine and glycine with tetrahydrofolate (THF) serving as the one-carbon carrier. This reaction serves as the major source of one-carbon groups required for the biosynthesis of purines, thymidylate, methionine, and other important biomolecules. Also exhibits THF-independent aldolase activity toward beta-hydroxyamino acids, producing glycine and aldehydes, via a retro-aldol mechanism. This Synechococcus sp. (strain ATCC 27144 / PCC 6301 / SAUG 1402/1) (Anacystis nidulans) protein is Serine hydroxymethyltransferase.